The chain runs to 763 residues: 5-methyltetrahydropteroyltriglutamate--homocysteine methyltransferase (763 aa).

Residues 16–19 (RELK) and Lys-117 each bind 5-methyltetrahydropteroyltri-L-glutamate. Residues 438–440 (IGS) and Glu-491 each bind L-homocysteine. Residues 438-440 (IGS) and Glu-491 each bind L-methionine. 5-methyltetrahydropteroyltri-L-glutamate-binding positions include 522 to 523 (RC) and Trp-568. Asp-606 is an L-homocysteine binding site. An L-methionine-binding site is contributed by Asp-606. A 5-methyltetrahydropteroyltri-L-glutamate-binding site is contributed by Glu-612. Residues His-648, Cys-650, and Glu-672 each coordinate Zn(2+). His-701 serves as the catalytic Proton donor. Cys-733 lines the Zn(2+) pocket.

The protein belongs to the vitamin-B12 independent methionine synthase family. The cofactor is Zn(2+).

The enzyme catalyses 5-methyltetrahydropteroyltri-L-glutamate + L-homocysteine = tetrahydropteroyltri-L-glutamate + L-methionine. Its pathway is amino-acid biosynthesis; L-methionine biosynthesis via de novo pathway; L-methionine from L-homocysteine (MetE route): step 1/1. Catalyzes the transfer of a methyl group from 5-methyltetrahydrofolate to homocysteine resulting in methionine formation. The sequence is that of 5-methyltetrahydropteroyltriglutamate--homocysteine methyltransferase from Pseudomonas paraeruginosa (strain DSM 24068 / PA7) (Pseudomonas aeruginosa (strain PA7)).